The chain runs to 226 residues: Cytidylate kinase (226 aa).

10-18 (GPASSGKST) is a binding site for ATP.

It belongs to the cytidylate kinase family. Type 1 subfamily.

The protein localises to the cytoplasm. The catalysed reaction is CMP + ATP = CDP + ADP. It carries out the reaction dCMP + ATP = dCDP + ADP. The sequence is that of Cytidylate kinase from Streptococcus pyogenes serotype M1.